We begin with the raw amino-acid sequence, 546 residues long: Peroxisomal OPC-8:0-CoA ligase 1 (546 aa).

Positions 197, 198, 199, 200, 201, and 205 each coordinate ATP. Residue Lys-265 participates in CoA binding. The tract at residues 267 to 338 (EMHEMMSAIG…EKYPTVKILQ (72 aa)) is SBD1. Residues Gln-338, Gly-339, Thr-343, Asp-424, and Arg-439 each contribute to the ATP site. Residues 339–403 (GYGLTESTGI…LKGPSIMKGY (65 aa)) form an SBD2 region. CoA contacts are provided by Lys-447 and Gly-448. ATP is bound at residue Lys-530. Positions 544 to 546 (SKL) match the Microbody targeting signal motif.

The protein belongs to the ATP-dependent AMP-binding enzyme family. It depends on Mg(2+) as a cofactor. Expressed at low levels in seedlings, cotyledons, leaves, hypocotyls and roots.

It localises to the peroxisome. The enzyme catalyses (9S,13S,15Z)-12-oxophyto-10,15-dienoate + ATP + CoA = (10Z,15Z)-12-oxophytodienoyl-CoA + AMP + diphosphate. It catalyses the reaction (1S,2S)-OPC-8 + ATP + CoA = OPC8-CoA + AMP + diphosphate. The catalysed reaction is hexadecanoate + ATP + CoA = hexadecanoyl-CoA + AMP + diphosphate. It carries out the reaction (9Z)-octadecenoate + ATP + CoA = (9Z)-octadecenoyl-CoA + AMP + diphosphate. The enzyme catalyses tetradecanoate + ATP + CoA = tetradecanoyl-CoA + AMP + diphosphate. It catalyses the reaction decanoate + ATP + CoA = decanoyl-CoA + AMP + diphosphate. The catalysed reaction is dodecanoate + ATP + CoA = dodecanoyl-CoA + AMP + diphosphate. It carries out the reaction octadecanoate + ATP + CoA = octadecanoyl-CoA + AMP + diphosphate. The enzyme catalyses OPC-6 + ATP + CoA = OPC-6-CoA + AMP + diphosphate. It catalyses the reaction dinor-OPDA + ATP + CoA = dinor-OPDA-CoA + AMP + diphosphate. Functionally, contributes to jasmonic acid biosynthesis by initiating the beta-oxidative chain shortening of its precursors. Converts 12-oxo-phytodienoic acid (OPDA) and 3-oxo-2-(2'-pentenyl)-cyclopentane-1-octanoic acid (OPC-8:0) into OPDA-CoA and OPC-8:0-CoA, respectively. Follows a two-step reaction mechanism, wherein the carboxylate substrate first undergoes adenylation by ATP, followed by a thioesterification in the presence of CoA to yield the final CoA thioester. This Arabidopsis thaliana (Mouse-ear cress) protein is Peroxisomal OPC-8:0-CoA ligase 1.